The chain runs to 313 residues: Biotin synthase (313 aa).

One can recognise a Radical SAM core domain in the interval N28–S258. Positions 46, 50, and 53 each coordinate [4Fe-4S] cluster. C90, C121, C181, and R256 together coordinate [2Fe-2S] cluster.

This sequence belongs to the radical SAM superfamily. Biotin synthase family. Homodimer. Requires [4Fe-4S] cluster as cofactor. [2Fe-2S] cluster serves as cofactor.

It catalyses the reaction (4R,5S)-dethiobiotin + (sulfur carrier)-SH + 2 reduced [2Fe-2S]-[ferredoxin] + 2 S-adenosyl-L-methionine = (sulfur carrier)-H + biotin + 2 5'-deoxyadenosine + 2 L-methionine + 2 oxidized [2Fe-2S]-[ferredoxin]. Its pathway is cofactor biosynthesis; biotin biosynthesis; biotin from 7,8-diaminononanoate: step 2/2. Catalyzes the conversion of dethiobiotin (DTB) to biotin by the insertion of a sulfur atom into dethiobiotin via a radical-based mechanism. This is Biotin synthase from Francisella tularensis subsp. tularensis (strain WY96-3418).